The primary structure comprises 156 residues: MMVLDKEDGVPMLSVQPKGKQKGCAGCNRKIKDRYLLKALDQYWHEDCLKCACCDCRLGEVGSTLYTKANLILCRRDYLRLFGTTGNCAACSKLIPAFEMVMRARDNVYHLDCFACQLCNQRFCVGDKFFLKNNMILCQMDYEEGQLNGTFDSHVQ.

LIM zinc-binding domains follow at residues Lys-22–Thr-84 and Gly-86–Asn-148.

As to expression, expressed in the brain and not in the thymus.

The protein resides in the nucleus. Its function is as follows. May be involved in gene regulation within neural lineage cells potentially by direct DNA binding or by binding to other transcription factors. In Bos taurus (Bovine), this protein is Rhombotin-1 (LMO1).